We begin with the raw amino-acid sequence, 371 residues long: Neuropeptide S receptor (371 aa).

Over residues 1–21 the composition is skewed to polar residues; that stretch reads MPANFTEGSFDSSGTGQTLDS. The segment at 1–22 is disordered; sequence MPANFTEGSFDSSGTGQTLDSS. Residues 1–52 are Extracellular-facing; sequence MPANFTEGSFDSSGTGQTLDSSPVACTETVTFTEVVEGKEWGSFYYSFKTEQ. N-linked (GlcNAc...) asparagine glycosylation is present at Asn4. The chain crosses the membrane as a helical span at residues 53 to 73; that stretch reads LITLWVLFVFTIVGNSVVLFS. The Cytoplasmic segment spans residues 74–82; the sequence is TWRRKKKSR. Residues 83 to 103 form a helical membrane-spanning segment; it reads MTFFVTQLAITDSFTGLVNIL. Residues 104-123 lie on the Extracellular side of the membrane; the sequence is TDINWRFTGDFTAPDLVCRV. A disulfide bond links Cys121 and Cys197. Residues 124-144 traverse the membrane as a helical segment; that stretch reads VRYLQVVLLYASTYVLVSLSI. The Cytoplasmic portion of the chain corresponds to 145–164; sequence DRYHAIVYPMKFLQGEKQAR. Residues 165 to 185 traverse the membrane as a helical segment; that stretch reads VLIVIAWSLSFLFSIPTLIIF. Topologically, residues 186-212 are extracellular; it reads GKRTLSNGEVQCWALWPDDSYWTPYMT. The chain crosses the membrane as a helical span at residues 213-233; sequence IVAFLVYFIPLTIISIMYGIV. The Cytoplasmic portion of the chain corresponds to 234-275; sequence IRTIWIKSKTYETVISNCSDGKLCSSYNRGLISKAKIKAIKY. The chain crosses the membrane as a helical span at residues 276 to 296; that stretch reads SIIIILAFICCWSPYFLFDIL. At 297–312 the chain is on the extracellular side; that stretch reads DNFNLLPDTQERFYAS. A helical membrane pass occupies residues 313 to 333; that stretch reads VIIQNLPALNSAINPLIYCVF. Residues 334–371 lie on the Cytoplasmic side of the membrane; that stretch reads SSSISFPCREQRSQDSRMTFRERTERHEMQILSKPEFI.

Belongs to the G-protein coupled receptor 1 family. Vasopressin/oxytocin receptor subfamily. Isoform 4 is ubiquitous; it is detected in glandular epithelia of bronchus, stomach, small intestine, colon, uterus, esophagus, spleen, kidney, pancreas, prostate and breast. Isoform 1 is detected in uterus, colon and prostate, and in the smooth muscle cell layer in bronchial and arterial walls (at protein level). Isoform 1 is predominantly expressed in smooth muscle. Isoform 4 is predominantly expressed in epithelial cells. In bronchial biopsies, it is expressed in smooth muscle cells of asthma patients, but not in control patients; whereas in epithelial cells, its expression is consistently stronger in asthma patients.

The protein resides in the cell membrane. Its subcellular location is the cytoplasm. In terms of biological role, G-protein coupled receptor for neuropeptide S (NPS). Promotes mobilization of intracellular Ca(2+) stores. Inhibits cell growth in response to NPS binding. Involved in pathogenesis of asthma and other IgE-mediated diseases. This chain is Neuropeptide S receptor (NPSR1), found in Homo sapiens (Human).